Reading from the N-terminus, the 445-residue chain is Phosphoglucosamine mutase (445 aa).

The active-site Phosphoserine intermediate is the Ser102. Ser102, Asp240, Asp242, and Asp244 together coordinate Mg(2+). Ser102 bears the Phosphoserine mark.

This sequence belongs to the phosphohexose mutase family. Mg(2+) is required as a cofactor. Activated by phosphorylation.

The catalysed reaction is alpha-D-glucosamine 1-phosphate = D-glucosamine 6-phosphate. Catalyzes the conversion of glucosamine-6-phosphate to glucosamine-1-phosphate. This is Phosphoglucosamine mutase from Mycobacterium marinum (strain ATCC BAA-535 / M).